A 436-amino-acid polypeptide reads, in one-letter code: Cholecystokinin receptor type A (436 aa).

Residues 1–41 (MDVVDSLLMNGSNITPPCELGLENETLFCLDQPQPSKEWQS) lie on the Extracellular side of the membrane. Asn10 and Asn24 each carry an N-linked (GlcNAc...) asparagine glycan. Cys18 and Cys29 are joined by a disulfide. The chain crosses the membrane as a helical span at residues 42–67 (AVQILLYSFIFLLSVLGNTLVITVLI). The Cytoplasmic segment spans residues 68–77 (RNKRMRTVTN). Residues 78–104 (IFLLSLAVSDLMLCLFCMPFNLIPNLL) traverse the membrane as a helical segment. Residues 105–115 (KDFIFGSAVCK) lie on the Extracellular side of the membrane. Cys114 and Cys196 form a disulfide bridge. Residues 116-137 (TTTYFMGTSVSVSTFNLVAISL) traverse the membrane as a helical segment. The Cytoplasmic segment spans residues 138-157 (ERYGAICRPLQSRVWQTKSH). The chain crosses the membrane as a helical span at residues 158–178 (ALKVIAATWCLSFTIMTPYPI). Topologically, residues 179–210 (YSNLVPFTKNNNQTANMCRFLLPSDAMQQSWQ) are extracellular. The N-linked (GlcNAc...) asparagine glycan is linked to Asn190. Residues 211–234 (TFLLLILFLIPGVVMVVAYGLISL) traverse the membrane as a helical segment. Over 235–321 (ELYQGIKFDA…NLIAKKRVIR (87 aa)) the chain is Cytoplasmic. The interval 252–280 (EKRLSSGGGGGGGSSSSRYEDSDGCYLQK) is disordered. Residues 322–342 (MLIVIVVLFFLCWMPIFSANA) traverse the membrane as a helical segment. Over 343–357 (WRAYDTVSAEKHLSG) the chain is Extracellular. Residues 358 to 381 (TPISFILLLSYTSSCVNPIIYCFM) traverse the membrane as a helical segment. Residues 382-436 (NKRFRLGFMATFPCCPNPGPTGVRGEVGEEEDGRTIRASLSRYSYSHMSTSAPPH) lie on the Cytoplasmic side of the membrane. Cys395 carries S-palmitoyl cysteine lipidation.

It belongs to the G-protein coupled receptor 1 family.

The protein localises to the cell membrane. In terms of biological role, receptor for cholecystokinin. Mediates pancreatic growth and enzyme secretion, smooth muscle contraction of the gall bladder and stomach. Has a 1000-fold higher affinity for CCK rather than for gastrin. It modulates feeding and dopamine-induced behavior in the central and peripheral nervous system. This receptor mediates its action by association with G proteins that activate a phosphatidylinositol-calcium second messenger system. This is Cholecystokinin receptor type A (Cckar) from Mus musculus (Mouse).